The chain runs to 440 residues: MNDYHLEDTTSELEALRLENAQLREQLAKREDSSRDYPLSLEEYQRYGRQMIVEETGGVAGQVKLKNTKVLVVGAGGLGCPALPYLAGAGVGQIGIVDNDVVETSNLHRQVLHDSSRVGMLKCESARQYITKLNPHINVVTYPVRLNSSNAFDIFKGYNYILDCTDSPLTRYLVSDVAVNLGITVVSASGLGTEGQLTILNFNNIGPCYRCFYPTPPPPNAVTSCQEGGVIGPCIGLVGTMMAVETLKLILGIYTNENFSPFLMLYSGFPQQSLRTFKMRGRQEKCLCCGKNRTITKEAIEKGEINYELFCGARNYNVCEPDERISVDAFQRIYKDDEFLAKHIFLDVRPSHHYEISHFPEAVNIPIKNLRDMNGDLKKLQEKLPSVEKDSNIVILCRYGNDSQLATRLLKDKFGFSNVRDVRGGYFKYIDDIDQTIPKY.

Position 1 is an N-acetylmethionine (Met1). ATP-binding positions include Gly77, Asp98, 105–109 (SNLHR), Lys122, and 166–167 (DS). Cys208 and Cys211 together coordinate Zn(2+). Residue Cys225 is the Glycyl thioester intermediate; for adenylyltransferase activity of the active site. 2 residues coordinate Zn(2+): Cys286 and Cys289. Phosphoserine is present on Ser326. A Rhodanese domain is found at 339 to 438 (FLAKHIFLDV…YIDDIDQTIP (100 aa)). Residue Cys397 is the Cysteine persulfide intermediate; for sulfurtransferase activity of the active site.

In the N-terminal section; belongs to the HesA/MoeB/ThiF family. UBA4 subfamily. Zn(2+) serves as cofactor.

The protein resides in the cytoplasm. Its subcellular location is the cytosol. The protein operates within tRNA modification; 5-methoxycarbonylmethyl-2-thiouridine-tRNA biosynthesis. In terms of biological role, plays a central role in 2-thiolation of mcm(5)S(2)U at tRNA wobble positions of cytosolic tRNA(Lys), tRNA(Glu) and tRNA(Gln). Acts by mediating the C-terminal thiocarboxylation of sulfur carrier URM1. Its N-terminus first activates URM1 as acyl-adenylate (-COAMP), then the persulfide sulfur on the catalytic cysteine is transferred to URM1 to form thiocarboxylation (-COSH) of its C-terminus. The reaction probably involves hydrogen sulfide that is generated from the persulfide intermediate and that acts as a nucleophile towards URM1. Subsequently, a transient disulfide bond is formed. Does not use thiosulfate as sulfur donor; NFS1 probably acting as a sulfur donor for thiocarboxylation reactions. Prior mcm(5) tRNA modification by the elongator complex is required for 2-thiolation. May also be involved in protein urmylation. The sequence is that of Adenylyltransferase and sulfurtransferase UBA4 from Saccharomyces cerevisiae (strain RM11-1a) (Baker's yeast).